Consider the following 386-residue polypeptide: Chaperone protein DnaJ (386 aa).

One can recognise a J domain in the interval 4–68 (NFYDVLGVSR…QKRQQYDQLG (65 aa)). 2 stretches are compositionally biased toward basic and acidic residues: residues 22–35 (KAYR…HPDV) and 43–79 (ERFK…DKRG). Residues 22–132 (KAYRKQAAEH…GGNRPRQGQD (111 aa)) form a disordered region. Composition is skewed to gly residues over residues 80–104 (ATGG…GAGG) and 113–125 (FGGG…GGGN). A CR-type zinc finger spans residues 147-229 (GATKEVTLTR…CGGDGVVREE (83 aa)). The Zn(2+) site is built by cysteine 160, cysteine 163, cysteine 177, cysteine 180, cysteine 203, cysteine 206, cysteine 217, and cysteine 220. CXXCXGXG motif repeat units lie at residues 160-167 (CDTCDGAG), 177-184 (CSQCNGRG), 203-210 (CPRCEGSG), and 217-224 (CADCGGDG).

The protein belongs to the DnaJ family. Homodimer. It depends on Zn(2+) as a cofactor.

The protein localises to the cytoplasm. Its function is as follows. Participates actively in the response to hyperosmotic and heat shock by preventing the aggregation of stress-denatured proteins and by disaggregating proteins, also in an autonomous, DnaK-independent fashion. Unfolded proteins bind initially to DnaJ; upon interaction with the DnaJ-bound protein, DnaK hydrolyzes its bound ATP, resulting in the formation of a stable complex. GrpE releases ADP from DnaK; ATP binding to DnaK triggers the release of the substrate protein, thus completing the reaction cycle. Several rounds of ATP-dependent interactions between DnaJ, DnaK and GrpE are required for fully efficient folding. Also involved, together with DnaK and GrpE, in the DNA replication of plasmids through activation of initiation proteins. In Halorubrum lacusprofundi (strain ATCC 49239 / DSM 5036 / JCM 8891 / ACAM 34), this protein is Chaperone protein DnaJ.